A 216-amino-acid polypeptide reads, in one-letter code: MASHLASIYGTEQDKVNCSFYYKIGACRHGERCSRKHVKPNFSQTILCPNMYKNPIHEPNGKKFTQRELAEQFDAFYEDMFCEFSKYGEVEQLVVCDNVGDHLVGNVYVRFKYEESAQNAIDDLNSRWYSQRPVYAELSPVTDFREACCRQHETSECQRGGLCNFMHAKKPSPQLLRDLVLAQRKYLALNAAEEMKKEPNSDSTNRWVSVTAERKN.

The segment at 12-40 (EQDKVNCSFYYKIGACRHGERCSRKHVKP) adopts a C3H1-type 1 zinc-finger fold. The region spanning 44–141 (QTILCPNMYK…RPVYAELSPV (98 aa)) is the RRM domain. The C3H1-type 2 zinc finger occupies 143–170 (DFREACCRQHETSECQRGGLCNFMHAKK). The segment at 194–216 (EMKKEPNSDSTNRWVSVTAERKN) is disordered.

Forms a heterodimer with the U2AF large subunit. Can also form a homodimer. U2AF large subunit (U2AF59), U2AF small subunit (U2AF23) and SF1 (bpb1) interact to form a complex required for complex A formation. Interacts with cwf13.

The protein resides in the nucleus. In terms of biological role, necessary for the splicing of pre-mRNA. The SF1-U2AF59-U2AF23 complex has a role in the recognition of the branch site (5'-UACUAAC-3'), the pyrimidine tract and the 3'-splice site at the 3'-end of introns. The polypeptide is Splicing factor U2AF 23 kDa subunit (Schizosaccharomyces pombe (strain 972 / ATCC 24843) (Fission yeast)).